The primary structure comprises 447 residues: uncharacterized protein (447 aa).

Disordered stretches follow at residues 1–80 (MTFE…EQSS), 115–184 (ATTQ…PNNP), and 295–322 (LQDN…SSGI). Over residues 11 to 32 (QRRDESAYRLGEEDGRQKGESS) the composition is skewed to basic and acidic residues. Positions 42 to 51 (KNPSNVSFWS) are enriched in polar residues. Positions 61–72 (VKTDRPQFHRAD) are enriched in basic and acidic residues. Positions 115–158 (ATTQSSPISTSFNPQLPSNSNTNRFDFGSESQLSSNYTNDTGLS) are enriched in polar residues. The segment covering 300–321 (SLTSQGSNLSSQNSGLSSSSSG) has biased composition (low complexity). Helical transmembrane passes span 385–405 (FMFL…ASFL) and 424–444 (IINR…IGLG).

The protein localises to the membrane. This is an uncharacterized protein from Schizosaccharomyces pombe (strain 972 / ATCC 24843) (Fission yeast).